A 165-amino-acid chain; its full sequence is MSHPALTRLRALRYFDAIPALEPHLLDWLLLEDSMTKRFEQQGKRVSVTLIREAFVGQSEVEEASGLLPSESRYWLREILLCADGEPWLAGRTVVPESTLCGPEQVLQHLGKTPLGRYLFTSSTLTRDFIEIGRDATLWGRRSRLRLSGKPLLLTELFLPASPLY.

Met35, Arg77, Leu115, and Glu156 together coordinate substrate.

This sequence belongs to the UbiC family. As to quaternary structure, monomer.

Its subcellular location is the cytoplasm. It carries out the reaction chorismate = 4-hydroxybenzoate + pyruvate. It participates in cofactor biosynthesis; ubiquinone biosynthesis. Functionally, removes the pyruvyl group from chorismate, with concomitant aromatization of the ring, to provide 4-hydroxybenzoate (4HB) for the ubiquinone pathway. This Salmonella agona (strain SL483) protein is Chorismate pyruvate-lyase.